Here is a 146-residue protein sequence, read N- to C-terminus: U-scoloptoxin(16)-Er1a (146 aa).

A signal peptide spans 1 to 26; that stretch reads MNTVSVVQFLAVGCAVFVLYGRGVFA.

It belongs to the scoloptoxin-16 family. Post-translationally, contains 4 disulfide bonds. As to expression, expressed by the venom gland.

It is found in the secreted. The polypeptide is U-scoloptoxin(16)-Er1a (Ethmostigmus rubripes (Giant centipede)).